The following is a 264-amino-acid chain: U1 snRNP-associated protein usp106 (264 aa).

Positions 83-126 (DYLEDLERHVDDCNKRIDIAEARREKTKEEEERIDELMRDIIHT) form a coiled coil. The segment covering 233-258 (EDREKSRDKKDGEKQRDNLASFEDKI) has biased composition (basic and acidic residues). Positions 233–264 (EDREKSRDKKDGEKQRDNLASFEDKISTSFVA) are disordered.

This sequence belongs to the Luc7 family. In terms of assembly, component of the U1 snRNP particle, a subcomplex of the spliceosome.

It localises to the cytoplasm. It is found in the nucleus. In terms of biological role, component of the U1 snRNP particle, which recognizes and binds the 5'-splice site of pre-mRNA. Together with other non-snRNP factors, U1 snRNP forms the spliceosomal commitment complex, that targets pre-mRNA to the splicing pathway. The sequence is that of U1 snRNP-associated protein usp106 (usp106) from Schizosaccharomyces pombe (strain 972 / ATCC 24843) (Fission yeast).